Consider the following 528-residue polypeptide: Peptide chain release factor 3 (528 aa).

In terms of domain architecture, tr-type G spans 11-279 (SRRRTFAIIS…GLVDWAPSPQ (269 aa)). GTP contacts are provided by residues 20–27 (SHPDAGKT), 88–92 (DTPGH), and 142–145 (NKLD).

Belongs to the TRAFAC class translation factor GTPase superfamily. Classic translation factor GTPase family. PrfC subfamily.

It localises to the cytoplasm. Its function is as follows. Increases the formation of ribosomal termination complexes and stimulates activities of RF-1 and RF-2. It binds guanine nucleotides and has strong preference for UGA stop codons. It may interact directly with the ribosome. The stimulation of RF-1 and RF-2 is significantly reduced by GTP and GDP, but not by GMP. The chain is Peptide chain release factor 3 from Pseudoalteromonas atlantica (strain T6c / ATCC BAA-1087).